Here is a 614-residue protein sequence, read N- to C-terminus: Probable ATP-dependent RNA helicase DDX5 (614 aa).

The span at 1-15 (MSGYSSDRDRGRDRG) shows a compositional bias: basic and acidic residues. A disordered region spans residues 1-39 (MSGYSSDRDRGRDRGFGAPRFGGSRAGPLSGKKFGNPGE). The residue at position 24 (Ser24) is a Phosphoserine. Lys32 bears the N6-acetyllysine; alternate mark. A Glycyl lysine isopeptide (Lys-Gly) (interchain with G-Cter in SUMO2); alternate cross-link involves residue Lys32. Lys33 and Lys40 each carry N6-acetyllysine. Residue Lys45 forms a Glycyl lysine isopeptide (Lys-Gly) (interchain with G-Cter in SUMO2) linkage. Residue Lys53 forms a Glycyl lysine isopeptide (Lys-Gly) (interchain with G-Cter in SUMO2); alternate linkage. Lys53 participates in a covalent cross-link: Glycyl lysine isopeptide (Lys-Gly) (interchain with G-Cter in SUMO); alternate. A Glycyl lysine isopeptide (Lys-Gly) (interchain with G-Cter in SUMO1); alternate cross-link involves residue Lys53. Residues 94-122 (LNFYEANFPANVMDVIARQNFTEPTAIQA) carry the Q motif motif. Residues 114–116 (FTE), Gln121, and 138–145 (AQTGSGKT) each bind ATP. The Helicase ATP-binding domain maps to 125–300 (WPVALSGLDM…EDFLKDYIHI (176 aa)). Lys236 carries the post-translational modification N6-acetyllysine. Positions 248–251 (DEAD) match the DEAD box motif. Tyr297 carries the post-translational modification Phosphotyrosine. The region spanning 328–475 (KLIRLMEEIM…AINPKLLQLV (148 aa)) is the Helicase C-terminal domain. Residues Lys340, Lys343, Lys388, Lys391, Lys411, Lys437, Lys451, and Lys470 each participate in a glycyl lysine isopeptide (Lys-Gly) (interchain with G-Cter in SUMO2) cross-link. Residues 477-504 (DRGSGRSRGRGGMKDDRRDRYSAGKRGG) are disordered. The segment at 477–614 (DRGSGRSRGR…GYPMPTGYSQ (138 aa)) is transactivation domain. A Phosphoserine modification is found at Ser480. Basic and acidic residues predominate over residues 488–498 (GMKDDRRDRYS). Ser520 carries the post-translational modification Phosphoserine. A Glycyl lysine isopeptide (Lys-Gly) (interchain with G-Cter in SUMO2) cross-link involves residue Lys523.

Belongs to the DEAD box helicase family. DDX5/DBP2 subfamily. As to quaternary structure, identified in the spliceosome C complex. Component of a ribonucleoprotein complex containing mRNAs and RNA-binding proteins including DDX5, HNRNPH2 and SRSF1 as well as splicing regulator ARVCF. Interacts with RBM4; the interaction occurs in an RNA-independent manner. Interacts with AGO1 and AGO2. Interacts with ESR1, AR, EP300, CREBBP, POLR2A, TP53, RUNX2 and HDAC1. Self-associates. Interacts with DDX17. Interacts with BRDT. The large PER complex involved in the repression of transcriptional termination is composed of at least PER2, CDK9, DDX5, DHX9, NCBP1 and POLR2A (active). Interacts with DHX36; this interaction occurs in a RNA-dependent manner. Interacts with NUPR1. Interacts with ERCC6. Interacts with DDX3X in the cytoplasm; this interaction may be more efficient when both proteins are unphosphorylated. Post-translationally, arg-502 is dimethylated, probably to asymmetric dimethylarginine. Sumoylated; sumoylation, promoted by PIAS1, promotes interaction with HDAC1 and transcriptional repression activity. Sumoylation also significantly increases stability, and reduces polyubiquitination. In terms of processing, polyubiquitinated, leading to proteasomal degradation. Post-translationally, weakly phosphorylated in the G1/S phase of the cell cycle and much more at G2/M, especially at Thr and Tyr residues.

It is found in the nucleus. Its subcellular location is the nucleolus. The protein localises to the nucleus speckle. It localises to the cytoplasm. It carries out the reaction ATP + H2O = ADP + phosphate + H(+). In terms of biological role, involved in the alternative regulation of pre-mRNA splicing; its RNA helicase activity is necessary for increasing tau exon 10 inclusion and occurs in a RBM4-dependent manner. Binds to the tau pre-mRNA in the stem-loop region downstream of exon 10. The rate of ATP hydrolysis is highly stimulated by single-stranded RNA. Involved in transcriptional regulation; the function is independent of the RNA helicase activity. Transcriptional coactivator for androgen receptor AR but probably not ESR1. Synergizes with DDX17 and SRA1 RNA to activate MYOD1 transcriptional activity and involved in skeletal muscle differentiation. Transcriptional coactivator for p53/TP53 and involved in p53/TP53 transcriptional response to DNA damage and p53/TP53-dependent apoptosis. Transcriptional coactivator for RUNX2 and involved in regulation of osteoblast differentiation. Acts as a transcriptional repressor in a promoter-specific manner; the function probably involves association with histone deacetylases, such as HDAC1. As component of a large PER complex is involved in the inhibition of 3' transcriptional termination of circadian target genes such as PER1 and NR1D1 and the control of the circadian rhythms. This Homo sapiens (Human) protein is Probable ATP-dependent RNA helicase DDX5 (DDX5).